A 243-amino-acid chain; its full sequence is Ubiquinone/menaquinone biosynthesis C-methyltransferase UbiE (243 aa).

S-adenosyl-L-methionine is bound by residues Thr-69, Asp-90, and 116-117 (DA).

This sequence belongs to the class I-like SAM-binding methyltransferase superfamily. MenG/UbiE family.

It catalyses the reaction a 2-demethylmenaquinol + S-adenosyl-L-methionine = a menaquinol + S-adenosyl-L-homocysteine + H(+). It carries out the reaction a 2-methoxy-6-(all-trans-polyprenyl)benzene-1,4-diol + S-adenosyl-L-methionine = a 5-methoxy-2-methyl-3-(all-trans-polyprenyl)benzene-1,4-diol + S-adenosyl-L-homocysteine + H(+). Its pathway is quinol/quinone metabolism; menaquinone biosynthesis; menaquinol from 1,4-dihydroxy-2-naphthoate: step 2/2. It functions in the pathway cofactor biosynthesis; ubiquinone biosynthesis. Functionally, methyltransferase required for the conversion of demethylmenaquinol (DMKH2) to menaquinol (MKH2) and the conversion of 2-polyprenyl-6-methoxy-1,4-benzoquinol (DDMQH2) to 2-polyprenyl-3-methyl-6-methoxy-1,4-benzoquinol (DMQH2). This is Ubiquinone/menaquinone biosynthesis C-methyltransferase UbiE from Paraburkholderia phytofirmans (strain DSM 17436 / LMG 22146 / PsJN) (Burkholderia phytofirmans).